Reading from the N-terminus, the 31-residue chain is Chassatide C6 (31 aa).

A cross-link (cyclopeptide (Gly-Asn)) is located at residues 1-31 (GVIPCGESCVFIPCISSVIGCSCKNKVCYRN). 3 cysteine pairs are disulfide-bonded: Cys-5-Cys-21, Cys-9-Cys-23, and Cys-14-Cys-28.

Post-translationally, this is a cyclic peptide. In terms of tissue distribution, expressed in fruit, pedicel, root and stem but not in leaf (at protein level).

Its function is as follows. Probably participates in a plant defense mechanism. This is Chassatide C6 from Chassalia chartacea (Chassalia curviflora).